The chain runs to 500 residues: Cytochrome P450 2D15 (500 aa).

Cys-446 is a heme binding site.

The protein belongs to the cytochrome P450 family. The cofactor is heme. Liver. Also detected in several other tissues.

It localises to the endoplasmic reticulum membrane. It is found in the microsome membrane. It carries out the reaction an organic molecule + reduced [NADPH--hemoprotein reductase] + O2 = an alcohol + oxidized [NADPH--hemoprotein reductase] + H2O + H(+). Functionally, high activity for the hydroxylation of bunitrolol and imipramine; low activity on debrisoquine. The protein is Cytochrome P450 2D15 (CYP2D15) of Canis lupus familiaris (Dog).